Consider the following 624-residue polypeptide: Interleukin-1 receptor-associated kinase-like 2 (624 aa).

In terms of domain architecture, Death spans 13–94; the sequence is LDDLCRNIDT…RAAQIVLSWK (82 aa). Positions 210-475 constitute a Protein kinase domain; that stretch reads FDQSHRISEG…LPEACAETWA (266 aa). Residues 216–224, Lys237, and 337–340 each bind ATP; these read ISEGTFADI and KSAN. Disordered regions lie at residues 508–536 and 549–593; these read SLPW…NSSL and RVSS…ETSW. Over residues 558–577 the composition is skewed to polar residues; that stretch reads GNGTAQPSTSGRQEADSSSE.

The protein belongs to the protein kinase superfamily. TKL Ser/Thr protein kinase family. Pelle subfamily. In terms of assembly, interacts with MYD88. IL-1 stimulation leads to the formation of a signaling complex which dissociates from the IL-1 receptor following the binding of PELI1.

In terms of biological role, binds to the IL-1 type I receptor following IL-1 engagement, triggering intracellular signaling cascades leading to transcriptional up-regulation and mRNA stabilization. This is Interleukin-1 receptor-associated kinase-like 2 (Irak2) from Rattus norvegicus (Rat).